A 155-amino-acid chain; its full sequence is Protein-export protein SecB (155 aa).

Belongs to the SecB family. Homotetramer, a dimer of dimers. One homotetramer interacts with 1 SecA dimer.

The protein resides in the cytoplasm. Functionally, one of the proteins required for the normal export of preproteins out of the cell cytoplasm. It is a molecular chaperone that binds to a subset of precursor proteins, maintaining them in a translocation-competent state. It also specifically binds to its receptor SecA. The polypeptide is Protein-export protein SecB (Cronobacter sakazakii (strain ATCC BAA-894) (Enterobacter sakazakii)).